The following is a 456-amino-acid chain: Gamma-aminobutyric acid receptor subunit alpha-1 (456 aa).

The first 27 residues, Met1–Gly27, serve as a signal peptide directing secretion. Topologically, residues Gln28–Phe253 are extracellular. N-linked (GlcNAc...) asparagine glycosylation occurs at Asn38. Arg94 contacts 4-aminobutanoate. N-linked (GlcNAc...) asparagine glycosylation occurs at Asn138. Residue Thr157 coordinates 4-aminobutanoate. A disulfide bridge links Cys166 with Cys180. Residues Val254 to Leu274 form a helical membrane-spanning segment. The Cytoplasmic portion of the chain corresponds to Asn275–Val279. A helical transmembrane segment spans residues Pro280–Arg301. The Extracellular portion of the chain corresponds to Asn302–Thr311. The chain crosses the membrane as a helical span at residues Ala312 to Thr333. Residues Val334–Arg421 lie on the Cytoplasmic side of the membrane. The helical transmembrane segment at Leu422–Thr441 threads the bilayer. Topologically, residues Tyr442–Gln456 are extracellular.

This sequence belongs to the ligand-gated ion channel (TC 1.A.9) family. Gamma-aminobutyric acid receptor (TC 1.A.9.5) subfamily. GABRA1 sub-subfamily. Heteropentamer, formed by a combination of alpha (GABRA1-6), beta (GABRB1-3), gamma (GABRG1-3), delta (GABRD), epsilon (GABRE), rho (GABRR1-3), pi (GABRP) and theta (GABRQ) subunits, each subunit exhibiting distinct physiological and pharmacological properties. Interacts with UBQLN1. Interacts with TRAK1. Interacts with KIF21B. Identified in a complex of 720 kDa composed of LHFPL4, NLGN2, GABRA1, GABRB2, GABRG2 and GABRB3. Interacts with LHFPL4. Interacts with NLGN2. Interacts with SHISA7; interaction leads to the regulation of GABA(A) receptor trafficking, channel deactivation kinetics and pharmacology.

It localises to the postsynaptic cell membrane. Its subcellular location is the cell membrane. It is found in the cytoplasmic vesicle membrane. The catalysed reaction is chloride(in) = chloride(out). Its activity is regulated as follows. Allosterically activated by benzodiazepines, the neuroanesthetic alphaxalone and pentobarbital. Inhibited by the antagonist bicuculline. Potentiated by histamine. Its function is as follows. Alpha subunit of the heteropentameric ligand-gated chloride channel gated by gamma-aminobutyric acid (GABA), a major inhibitory neurotransmitter in the brain. GABA-gated chloride channels, also named GABA(A) receptors (GABAAR), consist of five subunits arranged around a central pore and contain GABA active binding site(s) located at the alpha and beta subunit interface(s). When activated by GABA, GABAARs selectively allow the flow of chloride anions across the cell membrane down their electrochemical gradient. Alpha-1/GABRA1-containing GABAARs are largely synaptic. Chloride influx into the postsynaptic neuron following GABAAR opening decreases the neuron ability to generate a new action potential, thereby reducing nerve transmission. GABAARs containing alpha-1 and beta-2 or -3 subunits exhibit synaptogenic activity; the gamma-2 subunit being necessary but not sufficient to induce rapid synaptic contacts formation. GABAARs function also as histamine receptor where histamine binds at the interface of two neighboring beta subunits and potentiates GABA response. GABAARs containing alpha, beta and epsilon subunits also permit spontaneous chloride channel activity while preserving the structural information required for GABA-gated openings. Alpha-1-mediated plasticity in the orbitofrontal cortex regulates context-dependent action selection. Together with rho subunits, may also control neuronal and glial GABAergic transmission in the cerebellum. The polypeptide is Gamma-aminobutyric acid receptor subunit alpha-1 (GABRA1) (Macaca fascicularis (Crab-eating macaque)).